A 266-amino-acid polypeptide reads, in one-letter code: Undecaprenyl-diphosphatase (266 aa).

Transmembrane regions (helical) follow at residues 1-21 (MNIFQTIVLALVQGLSEFLPI), 43-63 (FDVVVHMGTLSAVIFYYQAMI), 83-103 (SKLAWGVLLGTIPVGLVGMIF), 114-134 (VEIIAYATLVFGVLLGFASWF), 144-164 (TISWVDIGFIGMAQTLALIPG), 186-206 (IQFAFLLSIPVISLSLILILI), 219-239 (LLAMGFVVAAISAYVTIVFFI), and 245-265 (VGMMPFVIYRLTLGIFLFFFI).

It belongs to the UppP family.

Its subcellular location is the cell inner membrane. It carries out the reaction di-trans,octa-cis-undecaprenyl diphosphate + H2O = di-trans,octa-cis-undecaprenyl phosphate + phosphate + H(+). Catalyzes the dephosphorylation of undecaprenyl diphosphate (UPP). Confers resistance to bacitracin. In Ruthia magnifica subsp. Calyptogena magnifica, this protein is Undecaprenyl-diphosphatase.